A 327-amino-acid chain; its full sequence is Putative pumilio homolog 19 (327 aa).

One can recognise a PUM-HD domain in the interval 1 to 324; the sequence is MAVSDNTFSM…NIANILDTFR (324 aa). Pumilio repeat units lie at residues 79–114, 115–149, 150–185, 186–222, 223–260, and 261–295; these read SDSDYFMSIVTTKFGSRRVQKLLGKSDDVDAFFCAA, ILRRFLHITTDKYASYVTIRAMVVFDKVMKKALYE, RILYHALDLACDQHGCIALNDIITDADDPYYRDQLL, ELVVSNALRLSNDASGNFVVQHVLTLYDSRCIHNIAV, NLYGQCIELSFKKYGSYIVEKLLEVEESMVVVVVELLG, and CDGDRLMRLARNEFGNFVVVKALRFTKEMRMDLFW.

The protein resides in the cytoplasm. In terms of biological role, sequence-specific RNA-binding protein that regulates translation and mRNA stability by binding the 3'-UTR of target mRNAs. In Arabidopsis thaliana (Mouse-ear cress), this protein is Putative pumilio homolog 19 (APUM19).